A 302-amino-acid polypeptide reads, in one-letter code: 4-hydroxy-tetrahydrodipicolinate synthase (302 aa).

Thr55 contributes to the pyruvate binding site. Residue Tyr144 is the Proton donor/acceptor of the active site. Lys172 serves as the catalytic Schiff-base intermediate with substrate. Val214 lines the pyruvate pocket.

This sequence belongs to the DapA family. In terms of assembly, homotetramer; dimer of dimers.

Its subcellular location is the cytoplasm. It catalyses the reaction L-aspartate 4-semialdehyde + pyruvate = (2S,4S)-4-hydroxy-2,3,4,5-tetrahydrodipicolinate + H2O + H(+). Its pathway is amino-acid biosynthesis; L-lysine biosynthesis via DAP pathway; (S)-tetrahydrodipicolinate from L-aspartate: step 3/4. Catalyzes the condensation of (S)-aspartate-beta-semialdehyde [(S)-ASA] and pyruvate to 4-hydroxy-tetrahydrodipicolinate (HTPA). This Prochlorococcus marinus (strain MIT 9313) protein is 4-hydroxy-tetrahydrodipicolinate synthase.